A 640-amino-acid chain; its full sequence is MVVKRKLNCGGSNGFDFPNIPKAPRSSRRKVSGKRSDDESEICAIDLLASLAGKLLEESESSSTSTYASEADNLDHLGGLIKQELEDGYTTKPCKSEFFDPGNPASKSTSENTSVTCLPFSSFENDCILEQTPVSDCKRASGLKSLVGSITEETCVVNEDAGSEQGANTFSLKDPSQLHSQSPESVLLDGDVKLAPCTDQVPNDSFKGYRNHSKLVCRDDDENYCKYYKFSDKCKSYRPLSRVGNRRIMQSVRAISKLKCFEDTRTDGRLKALYRKRKLCYGYNPWKRETIHRKRRLSDKGLVVNYDGGLSSESVSNSPEKGESENGDFSAAKIGLLSKDSRVKFSIKSLRIPELVIEVPETATVGLLKRTVKEAVTALLGGGIRIGVLVQGKKVRDDNNTLSQTGLSCRENLGNLGFTLEPGLETLPVPLCSETPVLSLPTDSTKLSERSAASPALETGIPLPPQDEDYLINLGNSVENNDELVPHLSDIPADEQPSSDSRALVPVLALESDALALVPVNEKPKRTELSQRRTRRPFSVTEVEALVSAVEEVGTGRWRDVKLRSFENASHRTYVDLKDKWKTLVHTASISPQQRRGEPVPQELLDRVLGAHRYWTQHQMKQNGKHQVATTMVVEAGSSM.

In terms of domain architecture, Ubiquitin-like spans 343-422 (VKFSIKSLRI…LGNLGFTLEP (80 aa)). The segment at 442-464 (TDSTKLSERSAASPALETGIPLP) is disordered. In terms of domain architecture, HTH myb-type spans 530–589 (SQRRTRRPFSVTEVEALVSAVEEVGTGRWRDVKLRSFENASHRTYVDLKDKWKTLVHTAS). Positions 558–585 (WRDVKLRSFENASHRTYVDLKDKWKTLV) form a DNA-binding region, H-T-H motif.

As to quaternary structure, homomultimer. Interacts with SNL1 (via PAH2). Interacts with STO. In terms of tissue distribution, expressed ubiquitously. Highest expression in flowers and roots.

The protein resides in the nucleus. Functionally, binds specifically to the plant telomeric double-stranded DNA sequences 5'-TTTAGGG-3'. At least 2 repeats of telomeric sequences are required for binding. Induces DNA bending. This chain is Telomere repeat-binding protein 4 (TRP4), found in Arabidopsis thaliana (Mouse-ear cress).